A 252-amino-acid polypeptide reads, in one-letter code: Thiazole synthase (252 aa).

The active-site Schiff-base intermediate with DXP is Lys91. 1-deoxy-D-xylulose 5-phosphate is bound by residues Gly152, 179-180 (AG), and 201-202 (NT).

It belongs to the ThiG family. Homotetramer. Forms heterodimers with either ThiH or ThiS.

It localises to the cytoplasm. It carries out the reaction [ThiS sulfur-carrier protein]-C-terminal-Gly-aminoethanethioate + 2-iminoacetate + 1-deoxy-D-xylulose 5-phosphate = [ThiS sulfur-carrier protein]-C-terminal Gly-Gly + 2-[(2R,5Z)-2-carboxy-4-methylthiazol-5(2H)-ylidene]ethyl phosphate + 2 H2O + H(+). It participates in cofactor biosynthesis; thiamine diphosphate biosynthesis. Catalyzes the rearrangement of 1-deoxy-D-xylulose 5-phosphate (DXP) to produce the thiazole phosphate moiety of thiamine. Sulfur is provided by the thiocarboxylate moiety of the carrier protein ThiS. In vitro, sulfur can be provided by H(2)S. The protein is Thiazole synthase of Erwinia amylovora (Fire blight bacteria).